The sequence spans 200 residues: Holliday junction branch migration complex subunit RuvA (200 aa).

Residues 1-63 are domain I; it reads MIAFVRGQVA…EDSLTLFGFA (63 aa). Residues 64–142 form a domain II region; the sequence is DEDEKQTFEL…APTGAGRSAG (79 aa). Residues 142–146 are flexible linker; sequence GVPAP. The domain III stretch occupies residues 147–200; that stretch reads AGAVWRDQVHQGLVGLGWPVRDAEKAVAAVAPEAGDVPDVAALLRAALRTLSKA.

The protein belongs to the RuvA family. As to quaternary structure, homotetramer. Forms an RuvA(8)-RuvB(12)-Holliday junction (HJ) complex. HJ DNA is sandwiched between 2 RuvA tetramers; dsDNA enters through RuvA and exits via RuvB. An RuvB hexamer assembles on each DNA strand where it exits the tetramer. Each RuvB hexamer is contacted by two RuvA subunits (via domain III) on 2 adjacent RuvB subunits; this complex drives branch migration. In the full resolvosome a probable DNA-RuvA(4)-RuvB(12)-RuvC(2) complex forms which resolves the HJ.

The protein resides in the cytoplasm. Functionally, the RuvA-RuvB-RuvC complex processes Holliday junction (HJ) DNA during genetic recombination and DNA repair, while the RuvA-RuvB complex plays an important role in the rescue of blocked DNA replication forks via replication fork reversal (RFR). RuvA specifically binds to HJ cruciform DNA, conferring on it an open structure. The RuvB hexamer acts as an ATP-dependent pump, pulling dsDNA into and through the RuvAB complex. HJ branch migration allows RuvC to scan DNA until it finds its consensus sequence, where it cleaves and resolves the cruciform DNA. This chain is Holliday junction branch migration complex subunit RuvA, found in Nocardioides sp. (strain ATCC BAA-499 / JS614).